The chain runs to 106 residues: Large ribosomal subunit protein uL24 (106 aa).

This sequence belongs to the universal ribosomal protein uL24 family. In terms of assembly, part of the 50S ribosomal subunit.

Functionally, one of two assembly initiator proteins, it binds directly to the 5'-end of the 23S rRNA, where it nucleates assembly of the 50S subunit. In terms of biological role, one of the proteins that surrounds the polypeptide exit tunnel on the outside of the subunit. The protein is Large ribosomal subunit protein uL24 of Acidiphilium cryptum (strain JF-5).